We begin with the raw amino-acid sequence, 283 residues long: Protein BASIC PENTACYSTEINE1 (283 aa).

Residues 111–170 (RFEENPIPPPAPCEEQTGKKRKMRGSIATPTVPKAKKMRKPKEERDVTNNNVQQQQQRVK) form a disordered region. Over residues 158 to 169 (TNNNVQQQQQRV) the composition is skewed to low complexity.

This sequence belongs to the BBR/BPC family. As to expression, expressed in seedlings, leaves and pistils. Detected in the base of flowers and tips of carpels, in leaf and sepal vasculature, in young rosette, in the lateral and tip of primary roots, and in the whole ovule.

The protein resides in the nucleus. Its function is as follows. Transcriptional regulator that specifically binds to GA-rich elements (GAGA-repeats) present in regulatory sequences of genes involved in developmental processes. Negatively regulates the homeotic gene AGL11/STK, which controls ovule primordium identity, by a cooperative binding to purine-rich elements present in the regulatory sequence leading to DNA conformational changes. The protein is Protein BASIC PENTACYSTEINE1 (BPC1) of Arabidopsis thaliana (Mouse-ear cress).